The sequence spans 201 residues: Sorting nexin-10 (201 aa).

The required for interaction with ATP6V1D stretch occupies residues 8–125; it reads EEFVSVWVRD…SLHLFLQSHL (118 aa). In terms of domain architecture, PX spans 10–127; that stretch reads FVSVWVRDPR…HLFLQSHLNS (118 aa). A 1,2-diacyl-sn-glycero-3-phospho-(1D-myo-inositol-3-phosphate) is bound by residues arginine 53, lysine 79, and arginine 94. The tract at residues 156-201 is disordered; that stretch reads FPEEDEEGKKENDIDYDSESSSSGLGHSSDDSSSHGCKVNTAPQES.

The protein belongs to the sorting nexin family. As to quaternary structure, interacts with ATP6V1D; may play a role in ciliogenesis.

The protein resides in the cytoplasm. The protein localises to the endosome membrane. It is found in the cytoskeleton. It localises to the microtubule organizing center. Its subcellular location is the centrosome. Its function is as follows. Probable phosphoinositide-binding protein involved in protein sorting and membrane trafficking in endosomes. Plays a role in cilium biogenesis through regulation of the transport and the localization of proteins to the cilium. Required for the localization to the cilium of V-ATPase subunit ATP6V1D and ATP6V0D1, and RAB8A. Involved in osteoclast differentiation and therefore bone resorption. The chain is Sorting nexin-10 (SNX10) from Homo sapiens (Human).